A 66-amino-acid chain; its full sequence is Large ribosomal subunit protein uL29c (66 aa).

It belongs to the universal ribosomal protein uL29 family.

The protein localises to the plastid. It localises to the chloroplast. The chain is Large ribosomal subunit protein uL29c from Gracilaria tenuistipitata var. liui (Red alga).